Reading from the N-terminus, the 119-residue chain is DNA-binding protein inhibitor ID-3 (119 aa).

Residues 28–80 form the bHLH domain; the sequence is RGKGPAAEEPLSLLDDMNHCYSRLRELVPGVPRGTQLSQVEILQRVIDYILDL.

As to quaternary structure, homodimer, and heterodimer with other HLH proteins. Interacts with COPS5 and COPS7A. Interacts with IFI204. Interacts with GATA4 and NKX2-5. Interacts with ANKRD2; both proteins cooperate in myoblast differentiation. Interacts with CLOCK and BMAL1.

The protein localises to the nucleus. Functionally, transcriptional regulator (lacking a basic DNA binding domain) which negatively regulates the basic helix-loop-helix (bHLH) transcription factors by forming heterodimers and inhibiting their DNA binding and transcriptional activity. Implicated in regulating a variety of cellular processes, including cellular growth, senescence, differentiation, apoptosis, angiogenesis, and neoplastic transformation. Involved in myogenesis by inhibiting skeletal muscle and cardiac myocyte differentiation and promoting muscle precursor cells proliferation. Inhibits the binding of E2A-containing protein complexes to muscle creatine kinase E-box enhancer. Regulates the circadian clock by repressing the transcriptional activator activity of the CLOCK-BMAL1 heterodimer. This chain is DNA-binding protein inhibitor ID-3 (ID3), found in Canis lupus familiaris (Dog).